The primary structure comprises 176 residues: Dual specificity phosphatase 28 (176 aa).

The Tyrosine-protein phosphatase domain occupies 17–159; the sequence is PPLVRVAPSL…LQKYEEALQA (143 aa). C103 functions as the Phosphocysteine intermediate in the catalytic mechanism.

The protein belongs to the protein-tyrosine phosphatase family. Non-receptor class dual specificity subfamily. In terms of assembly, monomer.

It catalyses the reaction O-phospho-L-tyrosyl-[protein] + H2O = L-tyrosyl-[protein] + phosphate. The catalysed reaction is O-phospho-L-seryl-[protein] + H2O = L-seryl-[protein] + phosphate. It carries out the reaction O-phospho-L-threonyl-[protein] + H2O = L-threonyl-[protein] + phosphate. Its function is as follows. Has phosphatase activity with the synthetic substrate 6,8-difluoro-4-methylumbelliferyl phosphate (in vitro). Has almost no detectable activity with phosphotyrosine, even less activity with phosphothreonine and displays complete lack of activity with phosphoserine. The poor activity with phosphotyrosine may be due to steric hindrance by bulky amino acid sidechains that obstruct access to the active site. This is Dual specificity phosphatase 28 (DUSP28) from Homo sapiens (Human).